The primary structure comprises 418 residues: L-rhamnose isomerase (418 aa).

3 residues coordinate Mn(2+): His262, Asp294, and Asp296.

The protein belongs to the rhamnose isomerase family. It depends on Mn(2+) as a cofactor.

The protein resides in the cytoplasm. The catalysed reaction is L-rhamnopyranose = L-rhamnulose. The protein operates within carbohydrate degradation; L-rhamnose degradation; glycerone phosphate from L-rhamnose: step 1/3. Its function is as follows. Catalyzes the interconversion of L-rhamnose and L-rhamnulose. In Bacteroides thetaiotaomicron (strain ATCC 29148 / DSM 2079 / JCM 5827 / CCUG 10774 / NCTC 10582 / VPI-5482 / E50), this protein is L-rhamnose isomerase.